The sequence spans 420 residues: Zinc finger protein Pegasus (420 aa).

A Glycyl lysine isopeptide (Lys-Gly) (interchain with G-Cter in SUMO2) cross-link involves residue lysine 5. C2H2-type zinc fingers lie at residues leucine 82 to histidine 104, histidine 110 to histidine 132, and tyrosine 138 to histidine 161. Lysine 185 participates in a covalent cross-link: Glycyl lysine isopeptide (Lys-Gly) (interchain with G-Cter in SUMO2). Composition is skewed to polar residues over residues glutamine 223 to threonine 236 and leucine 262 to alanine 273. Disordered stretches follow at residues glutamine 223 to methionine 247 and leucine 262 to proline 356. The span at glutamine 290–threonine 311 shows a compositional bias: low complexity. The span at serine 332–serine 349 shows a compositional bias: polar residues. Residues histidine 364–histidine 387 form a C2H2-type 4; degenerate zinc finger. Residues phenylalanine 393 to histidine 417 form a C2H2-type 5 zinc finger.

It belongs to the Ikaros C2H2-type zinc-finger protein family. As to quaternary structure, self-associates. Interacts with other family members; IKZF1, IKZF2, IKZF3 and IKZF4.

Its subcellular location is the nucleus. Transcriptional repressor that binds the core 5'GNNTGTNG-3' DNA consensus sequence. Involved in megakaryocyte differentiation. The polypeptide is Zinc finger protein Pegasus (IKZF5) (Pongo abelii (Sumatran orangutan)).